The following is a 517-amino-acid chain: Crotonobetaine/carnitine--CoA ligase (517 aa).

It belongs to the ATP-dependent AMP-binding enzyme family.

It catalyses the reaction 4-(trimethylamino)butanoate + ATP + CoA = 4-(trimethylamino)butanoyl-CoA + AMP + diphosphate. It carries out the reaction crotonobetaine + ATP + CoA = crotonobetainyl-CoA + AMP + diphosphate. The enzyme catalyses (R)-carnitine + ATP + CoA = (R)-carnitinyl-CoA + AMP + diphosphate. It functions in the pathway amine and polyamine metabolism; carnitine metabolism. Catalyzes the transfer of CoA to carnitine, generating the initial carnitinyl-CoA needed for the CaiB reaction cycle. Also has activity toward crotonobetaine and gamma-butyrobetaine. This chain is Crotonobetaine/carnitine--CoA ligase, found in Salmonella paratyphi C (strain RKS4594).